A 200-amino-acid polypeptide reads, in one-letter code: Holliday junction branch migration complex subunit RuvA (200 aa).

The tract at residues 1–65 (MYEYIKGTLT…ETEHVLYGFS (65 aa)) is domain I. Residues 66 to 144 (SRAERECFRL…TLMPLYLEEP (79 aa)) are domain II. The flexible linker stretch occupies residues 145 to 149 (VVPSS). The tract at residues 150 to 200 (TANSSFKEGIGALMNLGFSRLAADRMMTEAVKELSEEASVAELLPIALRKS) is domain III.

The protein belongs to the RuvA family. Homotetramer. Forms an RuvA(8)-RuvB(12)-Holliday junction (HJ) complex. HJ DNA is sandwiched between 2 RuvA tetramers; dsDNA enters through RuvA and exits via RuvB. An RuvB hexamer assembles on each DNA strand where it exits the tetramer. Each RuvB hexamer is contacted by two RuvA subunits (via domain III) on 2 adjacent RuvB subunits; this complex drives branch migration. In the full resolvosome a probable DNA-RuvA(4)-RuvB(12)-RuvC(2) complex forms which resolves the HJ.

The protein resides in the cytoplasm. The RuvA-RuvB-RuvC complex processes Holliday junction (HJ) DNA during genetic recombination and DNA repair, while the RuvA-RuvB complex plays an important role in the rescue of blocked DNA replication forks via replication fork reversal (RFR). RuvA specifically binds to HJ cruciform DNA, conferring on it an open structure. The RuvB hexamer acts as an ATP-dependent pump, pulling dsDNA into and through the RuvAB complex. HJ branch migration allows RuvC to scan DNA until it finds its consensus sequence, where it cleaves and resolves the cruciform DNA. The sequence is that of Holliday junction branch migration complex subunit RuvA from Chlamydia trachomatis serovar D (strain ATCC VR-885 / DSM 19411 / UW-3/Cx).